Reading from the N-terminus, the 86-residue chain is Immunity protein CdiI-1 (86 aa).

As to quaternary structure, interacts with the C-terminal fragment (CT) of cognate toxin protein CdiA-EC869.

In terms of biological role, immunity protein component of a toxin-immunity protein module, which functions as a cellular contact-dependent growth inhibition (CDI) system. CDI modules allow bacteria to communicate with and inhibit the growth of closely related neighboring bacteria in a contact-dependent fashion. Neutralizes the toxic activity of cognate toxin CdiA-EC869 (the C-terminal 289 residue CT fragment). Does not inhibit toxic activity of CdiA from other toxin-immunity modules or strains of E.coli. This is Immunity protein CdiI-1 from Escherichia coli O157:H7 (strain EC869).